A 43-amino-acid chain; its full sequence is Protein PsbN (43 aa).

A helical transmembrane segment spans residues 5–27; the sequence is TLVAISISCLLVSFTGYALYTAF.

This sequence belongs to the PsbN family.

It localises to the plastid. The protein localises to the chloroplast thylakoid membrane. Functionally, may play a role in photosystem I and II biogenesis. The chain is Protein PsbN from Cedrus deodara (Deodar cedar).